Here is a 93-residue protein sequence, read N- to C-terminus: Phosphoribosyl-ATP pyrophosphatase (93 aa).

The protein belongs to the PRA-PH family.

The protein resides in the cytoplasm. It carries out the reaction 1-(5-phospho-beta-D-ribosyl)-ATP + H2O = 1-(5-phospho-beta-D-ribosyl)-5'-AMP + diphosphate + H(+). It participates in amino-acid biosynthesis; L-histidine biosynthesis; L-histidine from 5-phospho-alpha-D-ribose 1-diphosphate: step 2/9. The chain is Phosphoribosyl-ATP pyrophosphatase from Mycolicibacterium vanbaalenii (strain DSM 7251 / JCM 13017 / BCRC 16820 / KCTC 9966 / NRRL B-24157 / PYR-1) (Mycobacterium vanbaalenii).